Reading from the N-terminus, the 99-residue chain is Protein Frey (99 aa).

The helical transmembrane segment at 13-29 threads the bilayer; sequence AGLSLFALYLVLAAALL. Residues 64–90 are disordered; the sequence is RPKHPWPRGPRPLLSRAQQRKRDGPDM.

As to quaternary structure, interacts with SPPL2C (via active sites); the interaction stabilizes FREY1 protein and inhibits SPPL2C proteolytic activity. Interacts with IZUMO1; the interaction retains IZUMO1 at the endoplasmic reticulum membrane and coordinates IZUMO1 complex assembly.

The protein resides in the endoplasmic reticulum membrane. Functionally, key regulator for male fertility expressed transiently in round spermatids where it recruits IZUMO1 at the endoplasmic reticulum (ER) membrane and coordinates the oolemmal binding multimeric complex (IZUMO1 complex) assembly. Upon complete assembly of the IZUMO1 complex, its ER retention is released, facilitating IZUMO1 complex export to the acrosome. Through the interaction with SPPL2C, inhibits its intramembrane protease activity directly accessing the catalytic center of an I-CLiP. The protein is Protein Frey (FREY1) of Bos taurus (Bovine).